The sequence spans 66 residues: Large ribosomal subunit protein bL35 (66 aa).

This sequence belongs to the bacterial ribosomal protein bL35 family.

The protein is Large ribosomal subunit protein bL35 of Phenylobacterium zucineum (strain HLK1).